The chain runs to 363 residues: Chorismate synthase (363 aa).

The NADP(+) site is built by Arg48 and Arg54. FMN-binding positions include 125 to 127, 237 to 238, Gly277, 292 to 296, and Arg318; these read RSS, NA, and KPTSS.

It belongs to the chorismate synthase family. As to quaternary structure, homotetramer. FMNH2 serves as cofactor.

The enzyme catalyses 5-O-(1-carboxyvinyl)-3-phosphoshikimate = chorismate + phosphate. It participates in metabolic intermediate biosynthesis; chorismate biosynthesis; chorismate from D-erythrose 4-phosphate and phosphoenolpyruvate: step 7/7. Functionally, catalyzes the anti-1,4-elimination of the C-3 phosphate and the C-6 proR hydrogen from 5-enolpyruvylshikimate-3-phosphate (EPSP) to yield chorismate, which is the branch point compound that serves as the starting substrate for the three terminal pathways of aromatic amino acid biosynthesis. This reaction introduces a second double bond into the aromatic ring system. In Pseudomonas entomophila (strain L48), this protein is Chorismate synthase.